We begin with the raw amino-acid sequence, 118 residues long: Non-specific lipid-transfer protein-like 1 (118 aa).

The SCP2 domain maps to 5-113 (SDVIFEEIKE…KLRTILDPKM (109 aa)).

This Caenorhabditis elegans protein is Non-specific lipid-transfer protein-like 1 (nlt-1).